Here is a 344-residue protein sequence, read N- to C-terminus: Probable dual-specificity RNA methyltransferase RlmN (344 aa).

Glutamate 92 serves as the catalytic Proton acceptor. One can recognise a Radical SAM core domain in the interval 98–325 (DEDRATLCVS…TTIRASRGED (228 aa)). The cysteines at positions 105 and 330 are disulfide-linked. [4Fe-4S] cluster contacts are provided by cysteine 112, cysteine 116, and cysteine 119. S-adenosyl-L-methionine is bound by residues 157–158 (GE), serine 189, 211–213 (SLH), and histidine 287. The active-site S-methylcysteine intermediate is the cysteine 330.

The protein belongs to the radical SAM superfamily. RlmN family. [4Fe-4S] cluster is required as a cofactor.

The protein localises to the cytoplasm. It catalyses the reaction adenosine(2503) in 23S rRNA + 2 reduced [2Fe-2S]-[ferredoxin] + 2 S-adenosyl-L-methionine = 2-methyladenosine(2503) in 23S rRNA + 5'-deoxyadenosine + L-methionine + 2 oxidized [2Fe-2S]-[ferredoxin] + S-adenosyl-L-homocysteine. It carries out the reaction adenosine(37) in tRNA + 2 reduced [2Fe-2S]-[ferredoxin] + 2 S-adenosyl-L-methionine = 2-methyladenosine(37) in tRNA + 5'-deoxyadenosine + L-methionine + 2 oxidized [2Fe-2S]-[ferredoxin] + S-adenosyl-L-homocysteine. Its function is as follows. Specifically methylates position 2 of adenine 2503 in 23S rRNA and position 2 of adenine 37 in tRNAs. This chain is Probable dual-specificity RNA methyltransferase RlmN, found in Bacteroides fragilis (strain ATCC 25285 / DSM 2151 / CCUG 4856 / JCM 11019 / LMG 10263 / NCTC 9343 / Onslow / VPI 2553 / EN-2).